Here is a 166-residue protein sequence, read N- to C-terminus: Protein FAM163B (166 aa).

The chain crosses the membrane as a helical span at residues 6–26; it reads VVITGGILATVILLCIIAVLC. Phosphoserine is present on Ser40.

The protein belongs to the FAM163 family.

The protein resides in the membrane. In Homo sapiens (Human), this protein is Protein FAM163B (FAM163B).